The chain runs to 79 residues: Dolichyl-diphosphooligosaccharide--protein glycosyltransferase subunit TMEM258 (79 aa).

2 helical membrane-spanning segments follow: residues 19-39 (PLLT…FTMI) and 55-75 (FIAA…LLWV).

Belongs to the OST5 family. In terms of assembly, component of the oligosaccharyltransferase (OST) complex.

Its subcellular location is the membrane. It functions in the pathway protein modification; protein glycosylation. Functionally, subunit of the oligosaccharyl transferase (OST) complex that catalyzes the initial transfer of a defined glycan (Glc(3)Man(9)GlcNAc(2) in eukaryotes) from the lipid carrier dolichol-pyrophosphate to an asparagine residue within an Asn-X-Ser/Thr consensus motif in nascent polypeptide chains, the first step in protein N-glycosylation. N-glycosylation occurs cotranslationally and the complex associates with the Sec61 complex at the channel-forming translocon complex that mediates protein translocation across the endoplasmic reticulum (ER). All subunits are required for a maximal enzyme activity. The protein is Dolichyl-diphosphooligosaccharide--protein glycosyltransferase subunit TMEM258 of Caenorhabditis elegans.